The following is a 71-amino-acid chain: Exodeoxyribonuclease 7 small subunit (71 aa).

Belongs to the XseB family. As to quaternary structure, heterooligomer composed of large and small subunits.

Its subcellular location is the cytoplasm. The catalysed reaction is Exonucleolytic cleavage in either 5'- to 3'- or 3'- to 5'-direction to yield nucleoside 5'-phosphates.. Bidirectionally degrades single-stranded DNA into large acid-insoluble oligonucleotides, which are then degraded further into small acid-soluble oligonucleotides. This Streptococcus pyogenes serotype M1 protein is Exodeoxyribonuclease 7 small subunit.